The following is a 191-amino-acid chain: Fe/S biogenesis protein NfuA (191 aa).

Residues Cys-149 and Cys-152 each contribute to the [4Fe-4S] cluster site.

The protein belongs to the NfuA family. As to quaternary structure, homodimer. It depends on [4Fe-4S] cluster as a cofactor.

Functionally, involved in iron-sulfur cluster biogenesis. Binds a 4Fe-4S cluster, can transfer this cluster to apoproteins, and thereby intervenes in the maturation of Fe/S proteins. Could also act as a scaffold/chaperone for damaged Fe/S proteins. The protein is Fe/S biogenesis protein NfuA of Escherichia coli O7:K1 (strain IAI39 / ExPEC).